We begin with the raw amino-acid sequence, 185 residues long: Protein OPG161 (185 aa).

The Intravirion segment spans residues 1–33 (MMTPENDEEQTSVFSATVYGDKIQGKNKRKRVI). A helical membrane pass occupies residues 34-56 (GLCIRISMVISLLSMITMSAFLI). Residues 57–185 (VRLNQCMSAN…RKYFCVKTMN (129 aa)) lie on the Virion surface side of the membrane. The C-type lectin-like domain stretch occupies residues 98–185 (ESCNGLYYQG…RKYFCVKTMN (88 aa)). Residues asparagine 125 and asparagine 135 are each glycosylated (N-linked (GlcNAc...) asparagine; by host).

It belongs to the orthopoxvirus OPG161 family. In terms of assembly, homodimer, disulfide-linked. Interacts with protein OPG190. Interacts (via C-terminus) with protein OPG164. Interacts with OPG162.

It is found in the virion membrane. Its subcellular location is the host membrane. Forms a complex with OPG162 and OPG190 to coordinate the incorporation of OPG164 into wrapped enveloped virion (EV) membranes and, subsequently, the production of actin tails. Therefore plays an essential role in efficient cell-to-cell spread of viral particles. This chain is Protein OPG161 (OPG161), found in Homo sapiens (Human).